The following is an 87-amino-acid chain: MNLELPKAEIRSATRVVGGPVTPRKGPPKFKQRQTRQFKSKPPKKGVQGFGDDIPGMEGLGTDITVICPWEAFNHLELHELAQYGII.

Met1 bears the N-acetylmethionine mark. The segment at 16–54 is disordered; it reads VVGGPVTPRKGPPKFKQRQTRQFKSKPPKKGVQGFGDDI. Positions 26–44 are enriched in basic residues; that stretch reads GPPKFKQRQTRQFKSKPPK.

Belongs to the rod/cone cGMP-PDE gamma subunit family. As to quaternary structure, oligomer composed of two catalytic chains (alpha and beta), an inhibitory chain (gamma) and the delta chain.

It catalyses the reaction 3',5'-cyclic GMP + H2O = GMP + H(+). Its function is as follows. Participates in processes of transmission and amplification of the visual signal. cGMP-PDEs are the effector molecules in G-protein-mediated phototransduction in vertebrate rods and cones. This is Retinal rod rhodopsin-sensitive cGMP 3',5'-cyclic phosphodiesterase subunit gamma (PDE6G) from Cavia porcellus (Guinea pig).